A 598-amino-acid polypeptide reads, in one-letter code: Arylsulfate sulfotransferase AssT (598 aa).

The first 27 residues, 1–27, serve as a signal peptide directing secretion; the sequence is MFDKYRKTLVAGTVAITLGLSASGVMA. Residues histidine 279 and histidine 383 each contribute to the 4-methylumbelliferone site. Cysteine 445 and cysteine 451 are disulfide-bonded. Histidine 463 serves as a coordination point for 4-methylumbelliferone. The active-site Nucleophile; sulfurylated histidine covalent intermediate is histidine 463.

This sequence belongs to the aryl sulfotransferase family. As to quaternary structure, homodimer. The disulfide bond is crucial for enzyme activity.

The protein resides in the periplasm. The catalysed reaction is an aryl sulfate + a phenol = an aryl sulfate + a phenol. It carries out the reaction 4-methylumbelliferone sulfate + phenol = phenyl sulfate + 4-methylumbelliferone. Functionally, catalyzes the transfer of a sulfate group from a phenyl sulfate ester to other phenolic compounds. In vitro, is able to use 4-methylumbelliferyl sulfate and p-nitrophenyl sulfate (PNS) as donor substrates with phenol as the acceptor substrate. Cannot use 3'-phosphoadenosine-5'-phophosulfate (PAPS), the donor substrate of mammalian sulfotransferase. This chain is Arylsulfate sulfotransferase AssT, found in Escherichia coli O6:H1 (strain CFT073 / ATCC 700928 / UPEC).